The primary structure comprises 488 residues: Cobyric acid synthase (488 aa).

The 188-residue stretch at 255–442 (ALKIAVPVLP…LHGLFGSDAY (188 aa)) folds into the GATase cobBQ-type domain. C337 functions as the Nucleophile in the catalytic mechanism. H434 is a catalytic residue.

The protein belongs to the CobB/CobQ family. CobQ subfamily.

Its pathway is cofactor biosynthesis; adenosylcobalamin biosynthesis. Catalyzes amidations at positions B, D, E, and G on adenosylcobyrinic A,C-diamide. NH(2) groups are provided by glutamine, and one molecule of ATP is hydrogenolyzed for each amidation. This chain is Cobyric acid synthase, found in Rhizobium johnstonii (strain DSM 114642 / LMG 32736 / 3841) (Rhizobium leguminosarum bv. viciae).